The sequence spans 573 residues: Probable D-xylulose kinase A (573 aa).

Residues histidine 97, arginine 168, aspartate 284, and asparagine 285 each coordinate substrate. Residues tryptophan 366, 471-472 (GG), and asparagine 475 contribute to the ATP site.

This sequence belongs to the FGGY kinase family.

Its subcellular location is the cytoplasm. It catalyses the reaction D-xylulose + ATP = D-xylulose 5-phosphate + ADP + H(+). Highly specific D-xylulose kinase which participates in the catabolism of xylose. Xylose is a major component of hemicelluloses such as xylan. Most fungi utilize D-xylose via three enzymatic reactions, xylose reductase (XR), xylitol dehydrogenase (XDH), and xylulokinase, to form xylulose 5-phosphate, which enters pentose phosphate pathway. The protein is Probable D-xylulose kinase A (xkiA) of Aspergillus fumigatus (strain ATCC MYA-4609 / CBS 101355 / FGSC A1100 / Af293) (Neosartorya fumigata).